The chain runs to 333 residues: MQTEPYIQPMQSPDFKPILCIVGPTGAGKTHLAMSLAEHAQSIGLTVELISMDSALVYRGLNIGSAKPSKEEQATVIHHLIDILEPTEVYSAARFAKDAKQLCEDIRSRGNIPVVVGGTMLYWRAWAHGLSSLPPANTDIRARLDEEGKSLGWPAMHTKLAQIDPETAARLKPNDSQRVQRALEVFEITGKPMSALLAESPSEDGREGSVIPPWINLVSLEPSDRKRLHLNLEKRFDEMLVGGLLEEVKTLKANVALHADLPAIRSVGYRQVWEYLDGQTDWEEMRYKSLAATRQLGKRQLTWLRAMTGRNTFDPFNPNELKAALDFCKRNLV.

23-30 (GPTGAGKT) is a binding site for ATP. 25 to 30 (TGAGKT) serves as a coordination point for substrate. Interaction with substrate tRNA stretches follow at residues 53-56 (DSAL) and 177-181 (QRVQR).

The protein belongs to the IPP transferase family. As to quaternary structure, monomer. Mg(2+) serves as cofactor.

It catalyses the reaction adenosine(37) in tRNA + dimethylallyl diphosphate = N(6)-dimethylallyladenosine(37) in tRNA + diphosphate. Catalyzes the transfer of a dimethylallyl group onto the adenine at position 37 in tRNAs that read codons beginning with uridine, leading to the formation of N6-(dimethylallyl)adenosine (i(6)A). The sequence is that of tRNA dimethylallyltransferase from Polynucleobacter asymbioticus (strain DSM 18221 / CIP 109841 / QLW-P1DMWA-1) (Polynucleobacter necessarius subsp. asymbioticus).